A 648-amino-acid chain; its full sequence is Zinc finger protein grt1 (648 aa).

The segment at residues 13–42 (ACENCRKRKVKCSGGDVCFECQKYNENCVY) is a DNA-binding region (zn(2)-C6 fungal-type).

In terms of assembly, monomer.

The protein resides in the nucleus. Functionally, may be involved in the facilitation of anaphase progression in mitosis. This is Zinc finger protein grt1 (grt1) from Schizosaccharomyces pombe (strain 972 / ATCC 24843) (Fission yeast).